Here is a 376-residue protein sequence, read N- to C-terminus: Cysteine synthase 1 (376 aa).

A mitochondrion-targeting transit peptide spans methionine 1 to arginine 16. The residue at position 79 (lysine 79) is an N6-(pyridoxal phosphate)lysine. Pyridoxal 5'-phosphate-binding positions include asparagine 109, glycine 215–threonine 219, and serine 314.

The protein belongs to the cysteine synthase/cystathionine beta-synthase family. Pyridoxal 5'-phosphate is required as a cofactor.

It localises to the mitochondrion. The enzyme catalyses O-succinyl-L-serine + hydrogen sulfide = L-cysteine + succinate. The catalysed reaction is O-acetyl-L-serine + hydrogen sulfide = L-cysteine + acetate. It functions in the pathway amino-acid biosynthesis; L-cysteine biosynthesis; L-cysteine from L-serine: step 2/2. Catalyzes the conversion of O-succinyl-L-serine into cysteine, the last step in the cysteine biosynthesis pathway. Can also use O-acetyl-L-serine. This is Cysteine synthase 1 (cys-17) from Neurospora crassa (strain ATCC 24698 / 74-OR23-1A / CBS 708.71 / DSM 1257 / FGSC 987).